The following is a 364-amino-acid chain: Probable dual-specificity RNA methyltransferase RlmN (364 aa).

The Proton acceptor role is filled by Glu-107. The region spanning 113 to 346 (HDYGNSVCVT…ATIRREQGSD (234 aa)) is the Radical SAM core domain. An intrachain disulfide couples Cys-120 to Cys-351. [4Fe-4S] cluster is bound by residues Cys-127, Cys-131, and Cys-134. Residues 177-178 (GE), Ser-209, 232-234 (SLH), and Asn-308 contribute to the S-adenosyl-L-methionine site. The S-methylcysteine intermediate role is filled by Cys-351.

It belongs to the radical SAM superfamily. RlmN family. [4Fe-4S] cluster is required as a cofactor.

It is found in the cytoplasm. It carries out the reaction adenosine(2503) in 23S rRNA + 2 reduced [2Fe-2S]-[ferredoxin] + 2 S-adenosyl-L-methionine = 2-methyladenosine(2503) in 23S rRNA + 5'-deoxyadenosine + L-methionine + 2 oxidized [2Fe-2S]-[ferredoxin] + S-adenosyl-L-homocysteine. The catalysed reaction is adenosine(37) in tRNA + 2 reduced [2Fe-2S]-[ferredoxin] + 2 S-adenosyl-L-methionine = 2-methyladenosine(37) in tRNA + 5'-deoxyadenosine + L-methionine + 2 oxidized [2Fe-2S]-[ferredoxin] + S-adenosyl-L-homocysteine. Specifically methylates position 2 of adenine 2503 in 23S rRNA and position 2 of adenine 37 in tRNAs. Confers resistance to some classes of antibiotics. The polypeptide is Probable dual-specificity RNA methyltransferase RlmN (Staphylococcus aureus (strain Mu3 / ATCC 700698)).